The chain runs to 199 residues: GTP cyclohydrolase-2 (199 aa).

49-53 (RIHSE) provides a ligand contact to GTP. Positions 54, 65, and 67 each coordinate Zn(2+). Residues Gln70, 92 to 94 (EGR), and Thr114 contribute to the GTP site. Asp126 (proton acceptor) is an active-site residue. Arg128 functions as the Nucleophile in the catalytic mechanism. The GTP site is built by Thr149 and Lys154. Positions 172–199 (ETGRNPHNSHYLETKRGKLGHLLEGDSE) are disordered.

It belongs to the GTP cyclohydrolase II family. Zn(2+) serves as cofactor.

The catalysed reaction is GTP + 4 H2O = 2,5-diamino-6-hydroxy-4-(5-phosphoribosylamino)-pyrimidine + formate + 2 phosphate + 3 H(+). It functions in the pathway cofactor biosynthesis; riboflavin biosynthesis; 5-amino-6-(D-ribitylamino)uracil from GTP: step 1/4. In terms of biological role, catalyzes the conversion of GTP to 2,5-diamino-6-ribosylamino-4(3H)-pyrimidinone 5'-phosphate (DARP), formate and pyrophosphate. In Teredinibacter turnerae (strain ATCC 39867 / T7901), this protein is GTP cyclohydrolase-2.